A 98-amino-acid chain; its full sequence is NADH-ubiquinone oxidoreductase chain 4L (98 aa).

3 helical membrane passes run 1-21, 29-49, and 61-81; these read MSIT…GMFV, SLLC…IVSL, and VILL…LIMV.

Belongs to the complex I subunit 4L family. Core subunit of respiratory chain NADH dehydrogenase (Complex I) which is composed of 45 different subunits.

The protein localises to the mitochondrion inner membrane. The catalysed reaction is a ubiquinone + NADH + 5 H(+)(in) = a ubiquinol + NAD(+) + 4 H(+)(out). In terms of biological role, core subunit of the mitochondrial membrane respiratory chain NADH dehydrogenase (Complex I) which catalyzes electron transfer from NADH through the respiratory chain, using ubiquinone as an electron acceptor. Part of the enzyme membrane arm which is embedded in the lipid bilayer and involved in proton translocation. The protein is NADH-ubiquinone oxidoreductase chain 4L (MT-ND4L) of Ochotona princeps (Southern American pika).